Here is a 445-residue protein sequence, read N- to C-terminus: Maltoporin (445 aa).

The signal sequence occupies residues 1 to 24 (MITLRKLPLAVAVAAGVMSAQAMA).

This sequence belongs to the porin LamB (TC 1.B.3) family. Homotrimer formed of three 18-stranded antiparallel beta-barrels, containing three independent channels.

The protein resides in the cell outer membrane. It catalyses the reaction beta-maltose(in) = beta-maltose(out). Functionally, involved in the transport of maltose and maltodextrins. The polypeptide is Maltoporin (Shigella flexneri).